The sequence spans 180 residues: tRNA (cytidine(56)-2'-O)-methyltransferase (180 aa).

S-adenosyl-L-methionine contacts are provided by residues L85, 114-118, and 132-139; these read GAEKV and VGNQPHSE.

The protein belongs to the aTrm56 family. Homodimer.

It is found in the cytoplasm. The catalysed reaction is cytidine(56) in tRNA + S-adenosyl-L-methionine = 2'-O-methylcytidine(56) in tRNA + S-adenosyl-L-homocysteine + H(+). In terms of biological role, specifically catalyzes the AdoMet-dependent 2'-O-ribose methylation of cytidine at position 56 in tRNAs. In Thermococcus kodakarensis (strain ATCC BAA-918 / JCM 12380 / KOD1) (Pyrococcus kodakaraensis (strain KOD1)), this protein is tRNA (cytidine(56)-2'-O)-methyltransferase.